The primary structure comprises 305 residues: N-acetylmuramic acid 6-phosphate etherase (305 aa).

The interval 1–24 is disordered; the sequence is MTTPPSSPLSDPRRTEGVHPTHTD. Residues 11-24 are compositionally biased toward basic and acidic residues; the sequence is DPRRTEGVHPTHTD. The region spanning 62–225 is the SIS domain; it reads ALPRLERGGR…SSALMVRLGK (164 aa). Residue Glu90 is the Proton donor of the active site. Residue Glu121 is part of the active site.

Belongs to the GCKR-like family. MurNAc-6-P etherase subfamily. As to quaternary structure, homodimer.

It catalyses the reaction N-acetyl-D-muramate 6-phosphate + H2O = N-acetyl-D-glucosamine 6-phosphate + (R)-lactate. It functions in the pathway amino-sugar metabolism; N-acetylmuramate degradation. Its function is as follows. Specifically catalyzes the cleavage of the D-lactyl ether substituent of MurNAc 6-phosphate, producing GlcNAc 6-phosphate and D-lactate. This chain is N-acetylmuramic acid 6-phosphate etherase, found in Deinococcus geothermalis (strain DSM 11300 / CIP 105573 / AG-3a).